A 389-amino-acid chain; its full sequence is tRNA-specific 2-thiouridylase MnmA (389 aa).

Residues 9-16 (GMSGGVDS) and methionine 35 each bind ATP. Residues 95–97 (NPD) form an interaction with target base in tRNA region. Residue cysteine 100 is the Nucleophile of the active site. A disulfide bridge connects residues cysteine 100 and cysteine 196. Glycine 124 is an ATP binding site. The interaction with tRNA stretch occupies residues 146-148 (KDQ). Cysteine 196 functions as the Cysteine persulfide intermediate in the catalytic mechanism. An interaction with tRNA region spans residues 308–309 (RY).

It belongs to the MnmA/TRMU family.

It is found in the cytoplasm. It carries out the reaction S-sulfanyl-L-cysteinyl-[protein] + uridine(34) in tRNA + AH2 + ATP = 2-thiouridine(34) in tRNA + L-cysteinyl-[protein] + A + AMP + diphosphate + H(+). Its function is as follows. Catalyzes the 2-thiolation of uridine at the wobble position (U34) of tRNA, leading to the formation of s(2)U34. In Burkholderia ambifaria (strain MC40-6), this protein is tRNA-specific 2-thiouridylase MnmA.